The sequence spans 123 residues: MYSSGIDIVDVLRIKKLHERFGERFLHKIYTKGELEYAFSTKEPYLRLAARFAAKEAAAKALGTGIGKVNFKDIEVVLGTDGPELIFHGYAAKIFQEKGFTGKSLSLSHEKKVAVAICVMWRD.

2 residues coordinate Mg(2+): aspartate 7 and glutamate 56.

Belongs to the P-Pant transferase superfamily. AcpS family. Mg(2+) is required as a cofactor.

The protein resides in the cytoplasm. The catalysed reaction is apo-[ACP] + CoA = holo-[ACP] + adenosine 3',5'-bisphosphate + H(+). In terms of biological role, transfers the 4'-phosphopantetheine moiety from coenzyme A to a Ser of acyl-carrier-protein. This chain is Holo-[acyl-carrier-protein] synthase, found in Carboxydothermus hydrogenoformans (strain ATCC BAA-161 / DSM 6008 / Z-2901).